The primary structure comprises 292 residues: Homoserine kinase (292 aa).

84-94 provides a ligand contact to ATP; that stretch reads PLSRGLGSSSA.

Belongs to the GHMP kinase family. Homoserine kinase subfamily.

It is found in the cytoplasm. It catalyses the reaction L-homoserine + ATP = O-phospho-L-homoserine + ADP + H(+). It functions in the pathway amino-acid biosynthesis; L-threonine biosynthesis; L-threonine from L-aspartate: step 4/5. Functionally, catalyzes the ATP-dependent phosphorylation of L-homoserine to L-homoserine phosphate. This is Homoserine kinase from Campylobacter jejuni subsp. jejuni serotype O:2 (strain ATCC 700819 / NCTC 11168).